The following is a 347-amino-acid chain: Haptoglobin (347 aa).

An N-terminal signal peptide occupies residues 1 to 18; it reads MRALGAVVTLLLWGQLFA. The region spanning 31–88 is the Sushi domain; sequence DSCPKPPEIANGYVEHLVRYRCRQFYRLRAEGDGVYTLNDEKQWMNTVAGEKLPECEA. 4 disulfide bridges follow: C52-C86, C90-C207, C250-C281, and C292-C322. One can recognise a Peptidase S1 domain in the interval 103–345; sequence IIGGSMDAKG…LKDWVQETMA (243 aa). N148, N182, and N264 each carry an N-linked (GlcNAc...) asparagine glycan. Positions 259 to 264 are interaction with CD163; that stretch reads VPEKKN.

Belongs to the peptidase S1 family. Tetramer of two alpha and two beta chains; disulfide-linked. The hemoglobin/haptoglobin complex is composed of a haptoglobin dimer bound to two hemoglobin alpha-beta dimers. Interacts with CD163. Interacts with ERGIC3. As to expression, expressed by the liver and secreted in plasma.

The protein localises to the secreted. Functionally, as a result of hemolysis, hemoglobin is found to accumulate in the kidney and is secreted in the urine. Haptoglobin captures, and combines with free plasma hemoglobin to allow hepatic recycling of heme iron and to prevent kidney damage. Haptoglobin also acts as an antioxidant, has antibacterial activity and plays a role in modulating many aspects of the acute phase response. Hemoglobin/haptoglobin complexes are rapidly cleared by the macrophage CD163 scavenger receptor expressed on the surface of liver Kupfer cells through an endocytic lysosomal degradation pathway. The sequence is that of Haptoglobin (Hp) from Mus caroli (Ryukyu mouse).